Here is a 462-residue protein sequence, read N- to C-terminus: Cytochrome P450 20A1 (462 aa).

The chain crosses the membrane as a helical span at residues 4 to 24 (FAIFAVTFLLALVGAVLYLYP). C409 is a heme binding site.

The protein belongs to the cytochrome P450 family. Requires heme as cofactor.

The protein localises to the membrane. The sequence is that of Cytochrome P450 20A1 (Cyp20a1) from Rattus norvegicus (Rat).